A 701-amino-acid chain; its full sequence is MNKSGKYLVWTVLSVMGAFALGYIALNRGEQINALWIVVASVCIYLIAYRFYGLYIAKNVLAVDPTRMTPAVRHNDGLDYVPTDKKVLFGHHFAAIAGAGPLVGPVLAAQMGYLPGMIWLLAGVVLAGAVQDFMVLFVSTRRDGRSLGELVKEEMGPTAGVIALVACFMIMVIILAVLAMIVVKALTHSPWGTYTVAFTIPLALFMGIYLRYLRPGRIGEVSVIGLVFLIFAIISGGWVAESPTWAPYFDFTGVQLTWMLVGYGFVAAVLPVWLLLAPRDYLSTFLKIGTIVGLAVGILIMRPTLTMPALTKFVDGTGPVWTGNLFPFLFITIACGAVSGFHALISSGTTPKMLANEGQACFIGYGGMLMESFVAIMALVSACIIDPGVYFAMNSPMAVLAPAGTADVVASAAQVVSSWGFSITPDTLNQIASEVGEQSIISRAGGAPTLAVGMAYILHGALGGMMDVAFWYHFAILFEALFILTAVDAGTRAARFMLQDLLGVVSPGLKRTDSLPANLLATALCVLAWGYFLHQGVVDPLGGINTLWPLFGIANQMLAGMALMLCAVVLFKMKRQRYAWVALVPTAWLLICTLTAGWQKAFSPDAKVGFLAIANKFQAMIDSGNIPSQYTESQLAQLVFNNRLDAGLTIFFMVVVVVLALFSIKTALAALKDPKPTAKETPYEPMPENVEEIVAQAKGAH.

Over 1-6 (MNKSGK) the chain is Cytoplasmic. A helical transmembrane segment spans residues 7–27 (YLVWTVLSVMGAFALGYIALN). Over 28–33 (RGEQIN) the chain is Periplasmic. Residues 34–54 (ALWIVVASVCIYLIAYRFYGL) form a helical membrane-spanning segment. Over 55 to 86 (YIAKNVLAVDPTRMTPAVRHNDGLDYVPTDKK) the chain is Cytoplasmic. Residues 87 to 107 (VLFGHHFAAIAGAGPLVGPVL) form a helical membrane-spanning segment. The Periplasmic portion of the chain corresponds to 108-117 (AAQMGYLPGM). Residues 118 to 138 (IWLLAGVVLAGAVQDFMVLFV) form a helical membrane-spanning segment. Over 139–160 (STRRDGRSLGELVKEEMGPTAG) the chain is Cytoplasmic. The helical transmembrane segment at 161 to 181 (VIALVACFMIMVIILAVLAMI) threads the bilayer. The Periplasmic portion of the chain corresponds to 182-189 (VVKALTHS). A helical membrane pass occupies residues 190–210 (PWGTYTVAFTIPLALFMGIYL). The Cytoplasmic portion of the chain corresponds to 211-217 (RYLRPGR). The chain crosses the membrane as a helical span at residues 218 to 238 (IGEVSVIGLVFLIFAIISGGW). Residues 239–255 (VAESPTWAPYFDFTGVQ) lie on the Periplasmic side of the membrane. Residues 256–276 (LTWMLVGYGFVAAVLPVWLLL) form a helical membrane-spanning segment. Residues 277-280 (APRD) are Cytoplasmic-facing. The chain crosses the membrane as a helical span at residues 281 to 301 (YLSTFLKIGTIVGLAVGILIM). Residues 302–324 (RPTLTMPALTKFVDGTGPVWTGN) lie on the Periplasmic side of the membrane. Residues 325-345 (LFPFLFITIACGAVSGFHALI) form a helical membrane-spanning segment. Over 346–372 (SSGTTPKMLANEGQACFIGYGGMLMES) the chain is Cytoplasmic. A helical membrane pass occupies residues 373 to 393 (FVAIMALVSACIIDPGVYFAM). The Periplasmic segment spans residues 394-395 (NS). The chain crosses the membrane as a helical span at residues 396 to 416 (PMAVLAPAGTADVVASAAQVV). Topologically, residues 417 to 439 (SSWGFSITPDTLNQIASEVGEQS) are cytoplasmic. A helical transmembrane segment spans residues 440–460 (IISRAGGAPTLAVGMAYILHG). The Periplasmic portion of the chain corresponds to 461-463 (ALG). A helical transmembrane segment spans residues 464–484 (GMMDVAFWYHFAILFEALFIL). Residues 485-523 (TAVDAGTRAARFMLQDLLGVVSPGLKRTDSLPANLLATA) lie on the Cytoplasmic side of the membrane. The chain crosses the membrane as a helical span at residues 524–544 (LCVLAWGYFLHQGVVDPLGGI). The Periplasmic segment spans residues 545 to 550 (NTLWPL). A helical membrane pass occupies residues 551 to 571 (FGIANQMLAGMALMLCAVVLF). Residues 572–577 (KMKRQR) are Cytoplasmic-facing. A helical transmembrane segment spans residues 578 to 598 (YAWVALVPTAWLLICTLTAGW). The Periplasmic segment spans residues 599–643 (QKAFSPDAKVGFLAIANKFQAMIDSGNIPSQYTESQLAQLVFNNR). A helical membrane pass occupies residues 644 to 664 (LDAGLTIFFMVVVVVLALFSI). Residues 665–701 (KTALAALKDPKPTAKETPYEPMPENVEEIVAQAKGAH) are Cytoplasmic-facing.

This sequence belongs to the peptide transporter carbon starvation (CstA) (TC 2.A.114) family.

It localises to the cell inner membrane. Functionally, involved in peptide utilization during carbon starvation. The polypeptide is Peptide transporter CstA (Escherichia coli (strain K12)).